The primary structure comprises 147 residues: 18 kDa antigen 1 (147 aa).

The sHSP domain occupies 21–131; sequence TPTRPAVMPM…RPRKIAVGAA (111 aa).

It belongs to the small heat shock protein (HSP20) family.

Its function is as follows. Not known. This protein is one of the major immune reactive proteins in mycobacteria. In Mycobacterium avium, this protein is 18 kDa antigen 1.